Here is a 116-residue protein sequence, read N- to C-terminus: NADH-ubiquinone oxidoreductase chain 3 (116 aa).

Helical transmembrane passes span 3-23 (LITT…TISF), 56-76 (FFLI…LLPL), and 87-107 (LTLI…IYEW).

The protein belongs to the complex I subunit 3 family.

It is found in the mitochondrion membrane. The catalysed reaction is a ubiquinone + NADH + 5 H(+)(in) = a ubiquinol + NAD(+) + 4 H(+)(out). Functionally, core subunit of the mitochondrial membrane respiratory chain NADH dehydrogenase (Complex I) that is believed to belong to the minimal assembly required for catalysis. Complex I functions in the transfer of electrons from NADH to the respiratory chain. The immediate electron acceptor for the enzyme is believed to be ubiquinone. The polypeptide is NADH-ubiquinone oxidoreductase chain 3 (MT-ND3) (Oncorhynchus keta (Chum salmon)).